Reading from the N-terminus, the 231-residue chain is uncharacterized protein (231 aa).

Basic and acidic residues predominate over residues 1-10 (MDGKKREVEN). Residues 1–35 (MDGKKREVENGKNGNNIKDGNSSNTTNYGKDTKTT) are disordered. The span at 11 to 24 (GKNGNNIKDGNSSN) shows a compositional bias: low complexity. Over residues 25–35 (TTNYGKDTKTT) the composition is skewed to polar residues.

This is an uncharacterized protein from Aquifex aeolicus (strain VF5).